The sequence spans 367 residues: Ferrochelatase (367 aa).

Residues His-226 and Glu-307 each contribute to the Fe cation site.

The protein belongs to the ferrochelatase family.

It localises to the cytoplasm. The catalysed reaction is heme b + 2 H(+) = protoporphyrin IX + Fe(2+). It participates in porphyrin-containing compound metabolism; protoheme biosynthesis; protoheme from protoporphyrin-IX: step 1/1. In terms of biological role, catalyzes the ferrous insertion into protoporphyrin IX. In Burkholderia pseudomallei (strain 668), this protein is Ferrochelatase.